The chain runs to 186 residues: Transcription factor FapR (186 aa).

The MaoC-like domain maps to 98–168; it reads FTKTQIARGH…YVIEVNSYVR (71 aa).

Belongs to the FapR family.

Transcriptional factor involved in regulation of membrane lipid biosynthesis by repressing genes involved in fatty acid and phospholipid metabolism. This is Transcription factor FapR from Staphylococcus haemolyticus (strain JCSC1435).